The following is a 1322-amino-acid chain: Serine/threonine-protein kinase TIO (1322 aa).

Positions 6-256 constitute a Protein kinase domain; sequence YHVIELVGEG…WPALREHPFV (251 aa). Residues 12 to 20 and Lys-35 each bind ATP; that span reads VGEGSFGRV. The active-site Proton acceptor is the Asp-127. The required for the binding to Kinesin-12 members stretch occupies residues 1000 to 1322; that stretch reads CMEDRDLLKA…VIVAKVSGES (323 aa). ARM repeat units follow at residues 1056–1098, 1101–1140, 1143–1182, 1183–1223, 1226–1273, and 1281–1320; these read PRLA…DLSR, KAFYKYIGEASVLQPLKEYLTHVDPNIRAKACSALGNMCR, GYFYSALAEHQIIGLLIDRCADPDKRTQKFACFAIGNAAY, HNDT…NLVR, NKLC…LFSL, and QICRQFVKSSELFPVIARLKQSPEANIAHYASVIVAKVSG.

Belongs to the protein kinase superfamily. Ser/Thr protein kinase family. In terms of assembly, interacts with Kinesin-12 members KIN12A/PAKRP1 and KIN12B/PAKRP1L. Interacts with KIN7B/NACK2. As to expression, ubiquitous.

It localises to the cytoplasm. The protein resides in the cytoskeleton. The protein localises to the phragmoplast. The enzyme catalyses L-seryl-[protein] + ATP = O-phospho-L-seryl-[protein] + ADP + H(+). It carries out the reaction L-threonyl-[protein] + ATP = O-phospho-L-threonyl-[protein] + ADP + H(+). Its function is as follows. Plays a role in conventional modes of cytokinesis in meristems and during male gametogenesis but also acts in nonconventional modes of cytokinesis (cellularization) during female gametogenesis. Constitutes a signaling module in association with Kinesin-12 members that is required to support phragmoplast expansion and cell-plate growth in plant cells. The sequence is that of Serine/threonine-protein kinase TIO (TIO) from Arabidopsis thaliana (Mouse-ear cress).